The primary structure comprises 254 residues: 5-oxoprolinase subunit A (254 aa).

This sequence belongs to the LamB/PxpA family. As to quaternary structure, forms a complex composed of PxpA, PxpB and PxpC.

It catalyses the reaction 5-oxo-L-proline + ATP + 2 H2O = L-glutamate + ADP + phosphate + H(+). Functionally, catalyzes the cleavage of 5-oxoproline to form L-glutamate coupled to the hydrolysis of ATP to ADP and inorganic phosphate. In Brevibacillus brevis (strain 47 / JCM 6285 / NBRC 100599), this protein is 5-oxoprolinase subunit A.